A 64-amino-acid chain; its full sequence is DNA gyrase inhibitor YacG (64 aa).

Positions 9, 12, 28, and 32 each coordinate Zn(2+).

It belongs to the DNA gyrase inhibitor YacG family. As to quaternary structure, interacts with GyrB. The cofactor is Zn(2+).

In terms of biological role, inhibits all the catalytic activities of DNA gyrase by preventing its interaction with DNA. Acts by binding directly to the C-terminal domain of GyrB, which probably disrupts DNA binding by the gyrase. This chain is DNA gyrase inhibitor YacG, found in Enterobacter sp. (strain 638).